A 431-amino-acid chain; its full sequence is Glutamate--tRNA ligase 1 (431 aa).

Positions 6–16 (PSPTGDMHIGN) match the 'HIGH' region motif. A 'KMSKS' region motif is present at residues 235 to 239 (KMSKR). Lys238 serves as a coordination point for ATP.

Belongs to the class-I aminoacyl-tRNA synthetase family. Glutamate--tRNA ligase type 1 subfamily. As to quaternary structure, monomer.

Its subcellular location is the cytoplasm. The enzyme catalyses tRNA(Glu) + L-glutamate + ATP = L-glutamyl-tRNA(Glu) + AMP + diphosphate. In terms of biological role, catalyzes the attachment of glutamate to tRNA(Glu) in a two-step reaction: glutamate is first activated by ATP to form Glu-AMP and then transferred to the acceptor end of tRNA(Glu). The sequence is that of Glutamate--tRNA ligase 1 from Campylobacter curvus (strain 525.92).